The following is a 373-amino-acid chain: MSEKKINLLDLDRKAMRALFADLGEKPFRADQLMKWIYHFGVSDFEEMTNINKVLRQKLAARCEIVAPEISSYQKSADGTIKFAIHVGEGQEVETVYIPEDDRATLCVSSQVGCALECTFCSTAQQGFNRNLTVSEIVGQIWRVSHFLGFAKDTGERPITNVVMMGMGEPLLNLANVIPAMDIMLDDFGFSLSKRRVTLSTSGVVPALDKLGDALDVALAVSIHAPNDELRDILVPVNKKYPLQEFLAGIRRYIAKSNANRGRVTVEYVMLDHINDSTEQAHELAQLMKDTPCKVNLIPFNPYPGSPYGRSSNSRIDRFSKVLMEYGLTVIVRKTRGDDIDAACGQLAGDIRDRTKRLAKKRMQENQISVTMN.

Glu94 functions as the Proton acceptor in the catalytic mechanism. In terms of domain architecture, Radical SAM core spans 100–339 (EDDRATLCVS…VIVRKTRGDD (240 aa)). A disulfide bridge connects residues Cys107 and Cys344. Residues Cys114, Cys118, and Cys121 each coordinate [4Fe-4S] cluster. S-adenosyl-L-methionine contacts are provided by residues 168-169 (GE), Ser200, 222-224 (SIH), and Asn301. The active-site S-methylcysteine intermediate is Cys344.

This sequence belongs to the radical SAM superfamily. RlmN family. It depends on [4Fe-4S] cluster as a cofactor.

The protein resides in the cytoplasm. The enzyme catalyses adenosine(2503) in 23S rRNA + 2 reduced [2Fe-2S]-[ferredoxin] + 2 S-adenosyl-L-methionine = 2-methyladenosine(2503) in 23S rRNA + 5'-deoxyadenosine + L-methionine + 2 oxidized [2Fe-2S]-[ferredoxin] + S-adenosyl-L-homocysteine. It carries out the reaction adenosine(37) in tRNA + 2 reduced [2Fe-2S]-[ferredoxin] + 2 S-adenosyl-L-methionine = 2-methyladenosine(37) in tRNA + 5'-deoxyadenosine + L-methionine + 2 oxidized [2Fe-2S]-[ferredoxin] + S-adenosyl-L-homocysteine. Specifically methylates position 2 of adenine 2503 in 23S rRNA and position 2 of adenine 37 in tRNAs. m2A2503 modification seems to play a crucial role in the proofreading step occurring at the peptidyl transferase center and thus would serve to optimize ribosomal fidelity. The polypeptide is Dual-specificity RNA methyltransferase RlmN (Shewanella sp. (strain MR-4)).